We begin with the raw amino-acid sequence, 84 residues long: Dolichol phosphate-mannose biosynthesis regulatory protein (84 aa).

The next 2 helical transmembrane spans lie at 11–31 and 49–69; these read LGLV…VILL and YAVA…GLFI.

It belongs to the DPM2 family. Component of the dolichol-phosphate mannose (DPM) synthase complex composed of DPM1, DPM2 and DPM3; in the complex interacts directly with DPM3. Component of the glycosylphosphatidylinositol-N-acetylglucosaminyltransferase (GPI-GnT) complex composed at least by PIGA, PIGC, PIGH, PIGP, PIGQ, PIGY and DPM2. Interacts with PIGA, PIGC and PIGQ.

Its subcellular location is the endoplasmic reticulum membrane. Its pathway is protein modification; protein glycosylation. Its function is as follows. Regulates the biosynthesis of dolichol phosphate-mannose. Regulatory subunit of the dolichol-phosphate mannose (DPM) synthase complex; essential for the ER localization and stable expression of DPM1. Part of the glycosylphosphatidylinositol-N-acetylglucosaminyltransferase (GPI-GnT) complex that catalyzes the transfer of N-acetylglucosamine from UDP-N-acetylglucosamine to phosphatidylinositol and participates in the first step of GPI biosynthesis. May act by regulating the GPI-GNT complex. This chain is Dolichol phosphate-mannose biosynthesis regulatory protein, found in Homo sapiens (Human).